The following is a 151-amino-acid chain: S-protein homolog 1 (151 aa).

The N-terminal stretch at 1–18 is a signal peptide; that stretch reads MNCIKQFLLAICFSLALT.

It belongs to the plant self-incompatibility (S1) protein family. As to expression, restricted to floral tissues.

Its subcellular location is the secreted. This is S-protein homolog 1 from Arabidopsis thaliana (Mouse-ear cress).